We begin with the raw amino-acid sequence, 566 residues long: CTP synthase (566 aa).

Positions 1 to 270 (MTKFVFVTGG…DGLICDKLRL (270 aa)) are amidoligase domain. Ser13 contributes to the CTP binding site. Ser13 provides a ligand contact to UTP. ATP contacts are provided by residues 14–19 (SLGKGI) and Asp71. Positions 71 and 144 each coordinate Mg(2+). CTP contacts are provided by residues 151–153 (DIE), 191–196 (KTKPTQ), and Lys227. UTP contacts are provided by residues 191–196 (KTKPTQ) and Lys227. The 253-residue stretch at 295-547 (SIAMVGKYVD…IAATLEQRSA (253 aa)) folds into the Glutamine amidotransferase type-1 domain. Gly356 lines the L-glutamine pocket. Cys383 functions as the Nucleophile; for glutamine hydrolysis in the catalytic mechanism. L-glutamine-binding positions include 384-387 (LGMQ), Glu407, and Arg473. Residues His520 and Glu522 contribute to the active site.

Belongs to the CTP synthase family. As to quaternary structure, homotetramer.

The catalysed reaction is UTP + L-glutamine + ATP + H2O = CTP + L-glutamate + ADP + phosphate + 2 H(+). It catalyses the reaction L-glutamine + H2O = L-glutamate + NH4(+). It carries out the reaction UTP + NH4(+) + ATP = CTP + ADP + phosphate + 2 H(+). The protein operates within pyrimidine metabolism; CTP biosynthesis via de novo pathway; CTP from UDP: step 2/2. With respect to regulation, allosterically activated by GTP, when glutamine is the substrate; GTP has no effect on the reaction when ammonia is the substrate. The allosteric effector GTP functions by stabilizing the protein conformation that binds the tetrahedral intermediate(s) formed during glutamine hydrolysis. Inhibited by the product CTP, via allosteric rather than competitive inhibition. In terms of biological role, catalyzes the ATP-dependent amination of UTP to CTP with either L-glutamine or ammonia as the source of nitrogen. Regulates intracellular CTP levels through interactions with the four ribonucleotide triphosphates. In Polaromonas naphthalenivorans (strain CJ2), this protein is CTP synthase.